The chain runs to 177 residues: Large ribosomal subunit protein uL6 (177 aa).

Belongs to the universal ribosomal protein uL6 family. Part of the 50S ribosomal subunit.

Its function is as follows. This protein binds to the 23S rRNA, and is important in its secondary structure. It is located near the subunit interface in the base of the L7/L12 stalk, and near the tRNA binding site of the peptidyltransferase center. This is Large ribosomal subunit protein uL6 from Cereibacter sphaeroides (strain ATCC 17029 / ATH 2.4.9) (Rhodobacter sphaeroides).